A 133-amino-acid polypeptide reads, in one-letter code: Small ribosomal subunit protein uS8 (133 aa).

This sequence belongs to the universal ribosomal protein uS8 family. Part of the 30S ribosomal subunit. Contacts proteins S5 and S12.

One of the primary rRNA binding proteins, it binds directly to 16S rRNA central domain where it helps coordinate assembly of the platform of the 30S subunit. This is Small ribosomal subunit protein uS8 from Chlamydia pneumoniae (Chlamydophila pneumoniae).